The chain runs to 319 residues: Tetrahydromethanopterin S-methyltransferase subunit H (319 aa).

The protein belongs to the MtrH family. As to quaternary structure, the complex is composed of 8 subunits; MtrA, MtrB, MtrC, MtrD, MtrE, MtrF, MtrG and MtrH.

The catalysed reaction is 5-methyl-5,6,7,8-tetrahydromethanopterin + coenzyme M + 2 Na(+)(in) = 5,6,7,8-tetrahydromethanopterin + methyl-coenzyme M + 2 Na(+)(out). Its pathway is one-carbon metabolism; methanogenesis from CO(2); methyl-coenzyme M from 5,10-methylene-5,6,7,8-tetrahydromethanopterin: step 2/2. Functionally, part of a complex that catalyzes the formation of methyl-coenzyme M and tetrahydromethanopterin from coenzyme M and methyl-tetrahydromethanopterin. This is an energy-conserving, sodium-ion translocating step. MtrH catalyzes the transfer of the methyl group from methyl-tetrahydromethanopterin to the corrinoid prosthetic group of MtrA. In Methanocaldococcus jannaschii (strain ATCC 43067 / DSM 2661 / JAL-1 / JCM 10045 / NBRC 100440) (Methanococcus jannaschii), this protein is Tetrahydromethanopterin S-methyltransferase subunit H.